A 138-amino-acid polypeptide reads, in one-letter code: Histone H3 (138 aa).

Residues methionine 1–valine 49 are disordered. At lysine 5 the chain carries N6,N6,N6-trimethyllysine; alternate. Residue lysine 5 is modified to N6,N6-dimethyllysine; alternate. 2 positions are modified to N6-methyllysine; alternate: lysine 5 and lysine 10. Lysine 10 carries the post-translational modification N6-acetyllysine; alternate. Serine 11 carries the phosphoserine modification. Lysine 15 bears the N6,N6-dimethyllysine; alternate mark. N6-methyllysine; alternate is present on residues lysine 15, lysine 19, lysine 24, lysine 28, and lysine 39. Lysine 15, lysine 19, lysine 24, lysine 28, and lysine 39 each carry N6-acetyllysine; alternate. Residues lysine 28 and lysine 39 each carry the N6,N6,N6-trimethyllysine; alternate modification. An N6,N6-dimethyllysine; alternate mark is found at lysine 28 and lysine 39. Residues lysine 59 and lysine 67 each carry the N6-acetyllysine modification. Lysine 82 is modified (N6,N6,N6-trimethyllysine; alternate). The residue at position 82 (lysine 82) is an N6,N6-dimethyllysine; alternate. Lysine 82 bears the N6-methyllysine; alternate mark.

It belongs to the histone H3 family. In terms of assembly, the nucleosome is a histone octamer containing two molecules each of H2A, H2B, H3 and H4 assembled in one H3-H4 heterotetramer and two H2A-H2B heterodimers. The octamer wraps approximately 147 bp of DNA. Phosphorylated to form H3S10ph. H3S10ph promotes subsequent H3K14ac formation and is required for transcriptional activation through TBP recruitment to the promoters. Post-translationally, mono-, di- and trimethylated by the COMPASS complex to form H3K4me1/2/3. H3K4me activates gene expression by regulating transcription elongation and plays a role in telomere length maintenance. H3K4me enrichment correlates with transcription levels, and occurs in a 5' to 3' gradient with H3K4me3 enrichment at the 5'-end of genes, shifting to H3K4me2 and then H3K4me1. Methylated by SET2 to form H3K36me. H3K36me represses gene expression. Methylated by DOT1 to form H3K79me. H3K79me is required for association of SIR proteins with telomeric regions and for telomeric silencing. The COMPASS-mediated formation of H3K4me2/3 and the DOT1-mediated formation of H3K79me require H2BK123ub1. In terms of processing, acetylation of histone H3 leads to transcriptional activation. H3K14ac formation by GCN5 is promoted by H3S10ph. H3K14ac can also be formed by ESA1. H3K56ac formation occurs predominantly in newly synthesized H3 molecules during G1, S and G2/M of the cell cycle and may be involved in DNA repair.

Its subcellular location is the nucleus. It localises to the chromosome. Its function is as follows. Core component of nucleosome. Nucleosomes wrap and compact DNA into chromatin, limiting DNA accessibility to the cellular machineries which require DNA as a template. Histones thereby play a central role in transcription regulation, DNA repair, DNA replication and chromosomal stability. DNA accessibility is regulated via a complex set of post-translational modifications of histones, also called histone code, and nucleosome remodeling. In Cryptococcus neoformans var. neoformans serotype D (strain B-3501A) (Filobasidiella neoformans), this protein is Histone H3 (HHT1).